The chain runs to 254 residues: Switch-activating protein 1 (254 aa).

A compositionally biased stretch (basic and acidic residues) spans 1-10 (MEAPKMELKS). Positions 1-30 (MEAPKMELKSYKRKNASLSPSSSPAKAQRT) are disordered. Over residues 16-25 (ASLSPSSSPA) the composition is skewed to low complexity. Phosphoserine is present on residues Ser-17 and Ser-19. Repeat copies occupy residues 221–224 (GVNM), 225–228 (GTNM), 229–232 (GANM), and 233–236 (GANM). A 4 X 4 AA tandem repeats of G-[ATV]-N-M region spans residues 221–236 (GVNMGTNMGANMGANM).

In terms of assembly, homodimer.

The protein localises to the nucleus. Functionally, binds to sequences required for mating-type switching. Makes a simultaneous contact with both the alpha and beta domains of the switch-activating site SAS1. Also binds to replication fork barrier 1 (RFB1) located within a 78 base pair sequence near the 3' end of the rRNA coding region. This leads to replication fork blockage. It binds the consensus sequence 5'-TA[AG]GCAGNTN[CT]AACG[AC]G-3'. Its function is as follows. Has a role in chromosome organization and integrity where it is involved in chromosome segregation. Has a role in sister chromatid cohesion and condensation. This is Switch-activating protein 1 (sap1) from Schizosaccharomyces pombe (strain 972 / ATCC 24843) (Fission yeast).